Consider the following 106-residue polypeptide: Large ribosomal subunit protein uL24 (106 aa).

It belongs to the universal ribosomal protein uL24 family. As to quaternary structure, part of the 50S ribosomal subunit.

One of two assembly initiator proteins, it binds directly to the 5'-end of the 23S rRNA, where it nucleates assembly of the 50S subunit. Its function is as follows. One of the proteins that surrounds the polypeptide exit tunnel on the outside of the subunit. This chain is Large ribosomal subunit protein uL24, found in Acinetobacter baylyi (strain ATCC 33305 / BD413 / ADP1).